The chain runs to 172 residues: S-ribosylhomocysteine lyase (172 aa).

3 residues coordinate Fe cation: histidine 54, histidine 58, and cysteine 128.

This sequence belongs to the LuxS family. Homodimer. Fe cation is required as a cofactor.

The catalysed reaction is S-(5-deoxy-D-ribos-5-yl)-L-homocysteine = (S)-4,5-dihydroxypentane-2,3-dione + L-homocysteine. In terms of biological role, involved in the synthesis of autoinducer 2 (AI-2) which is secreted by bacteria and is used to communicate both the cell density and the metabolic potential of the environment. The regulation of gene expression in response to changes in cell density is called quorum sensing. Catalyzes the transformation of S-ribosylhomocysteine (RHC) to homocysteine (HC) and 4,5-dihydroxy-2,3-pentadione (DPD). This chain is S-ribosylhomocysteine lyase, found in Photobacterium profundum (strain SS9).